A 385-amino-acid chain; its full sequence is Multidrug export protein AcrE (385 aa).

An N-terminal signal peptide occupies residues 1 to 23 (MTKHARFFLLPSFILISAALIAG). Cys-24 carries N-palmitoyl cysteine lipidation. Cys-24 carries S-diacylglycerol cysteine lipidation. Residues 366–385 (ARPGEQVKATTDTPADTASK) are disordered. The segment covering 373–385 (KATTDTPADTASK) has biased composition (polar residues).

Belongs to the membrane fusion protein (MFP) (TC 8.A.1) family. Part of the tripartite efflux system AcrEF-TolC, which is composed of an inner membrane transporter, AcrF, a periplasmic membrane fusion protein, AcrE, and an outer membrane component, TolC. The complex forms a large protein conduit and can translocate molecules across both the inner and outer membranes.

The protein localises to the cell inner membrane. Its function is as follows. Part of the tripartite efflux system AcrEF-TolC. Involved in the efflux of indole and organic solvents. The polypeptide is Multidrug export protein AcrE (acrE) (Escherichia coli (strain K12)).